Here is a 182-residue protein sequence, read N- to C-terminus: Vomeronasal secretory protein 1 (182 aa).

Residues 1-18 form the signal peptide; the sequence is MRALLLIISFCLVAVLQA. Asn30 carries an N-linked (GlcNAc...) asparagine glycan. Cysteines 76 and 168 form a disulfide.

This sequence belongs to the calycin superfamily. Lipocalin family. As to expression, specifically expressed in vomeronasal and posterior glands of the nasal septum, the ducts of which open into the lumen of the vomeronasal organ.

The protein resides in the secreted. In terms of biological role, transport of lipophilic molecules, possible pheromone-carrier. The protein is Vomeronasal secretory protein 1 (Lcn3) of Mus musculus (Mouse).